The sequence spans 813 residues: Leucine--tRNA ligase (813 aa).

Residues 40-51 (SYPSGSKLHAGH) carry the 'HIGH' region motif. Residues 572-576 (KMSKS) carry the 'KMSKS' region motif. Lys-575 contacts ATP.

Belongs to the class-I aminoacyl-tRNA synthetase family.

It is found in the cytoplasm. It catalyses the reaction tRNA(Leu) + L-leucine + ATP = L-leucyl-tRNA(Leu) + AMP + diphosphate. This Clostridium botulinum (strain ATCC 19397 / Type A) protein is Leucine--tRNA ligase.